We begin with the raw amino-acid sequence, 430 residues long: Enolase (430 aa).

Residue Q163 coordinates (2R)-2-phosphoglycerate. The active-site Proton donor is E205. 3 residues coordinate Mg(2+): D242, E287, and D314. (2R)-2-phosphoglycerate contacts are provided by K339, R368, S369, and K390. The active-site Proton acceptor is K339.

This sequence belongs to the enolase family. Mg(2+) is required as a cofactor.

Its subcellular location is the cytoplasm. The protein resides in the secreted. The protein localises to the cell surface. It catalyses the reaction (2R)-2-phosphoglycerate = phosphoenolpyruvate + H2O. The protein operates within carbohydrate degradation; glycolysis; pyruvate from D-glyceraldehyde 3-phosphate: step 4/5. Its function is as follows. Catalyzes the reversible conversion of 2-phosphoglycerate (2-PG) into phosphoenolpyruvate (PEP). It is essential for the degradation of carbohydrates via glycolysis. This chain is Enolase, found in Alkaliphilus metalliredigens (strain QYMF).